A 406-amino-acid polypeptide reads, in one-letter code: Mitochondrial intermembrane space import and assembly protein 40 (406 aa).

A mitochondrion-targeting transit peptide spans 1 to 23 (MFRVSLQATRRVAFRSARQIRFY). Residues 24–37 (SAHPPSGGVSHMNK) are Mitochondrial matrix-facing. A helical; Signal-anchor for type II membrane protein transmembrane segment spans residues 38–54 (PALLLAGFSTLGAIYVA). Over 55 to 406 (DGCPTLIERK…AVTNTDDEKK (352 aa)) the chain is Mitochondrial intermembrane. Disordered regions lie at residues 67–110 (PAEK…TTPE) and 142–276 (VNEQ…PETG). A compositionally biased stretch (basic and acidic residues) spans 205 to 224 (ASKDGSEGESDVVLHEKSPA). Over residues 242–260 (SGGTAEQSATAAAAAAGVQ) the composition is skewed to low complexity. 3 disulfides stabilise this stretch: Cys-282–Cys-284, Cys-293–Cys-326, and Cys-303–Cys-316. The CHCH domain maps to 290 to 334 (YGPCGEEFKSAFSCFVYSEADPKGINCVEKFSTMQNCFRKYPDYY). 2 short sequence motifs (cx9C motif) span residues 293 to 303 (CGEEFKSAFSC) and 316 to 326 (CVEKFSTMQNC). Disordered stretches follow at residues 341–365 (EEEA…ATST) and 384–406 (EENP…DEKK). Low complexity predominate over residues 356–365 (TTPVSTATST). The span at 384 to 393 (EENPQLKDTP) shows a compositional bias: basic and acidic residues.

As to quaternary structure, monomer. Cu(2+) serves as cofactor. It depends on Zn(2+) as a cofactor.

Its subcellular location is the mitochondrion inner membrane. Its function is as follows. Required for the import and folding of small cysteine-containing proteins (small Tim) in the mitochondrial intermembrane space (IMS). Forms a redox cycle with ERV1 that involves a disulfide relay system. Precursor proteins to be imported into the IMS are translocated in their reduced form into the mitochondria. The oxidized form of MIA40 forms a transient intermolecular disulfide bridge with the reduced precursor protein, resulting in oxidation of the precursor protein that now contains an intramolecular disulfide bond and is able to undergo folding in the IMS. This chain is Mitochondrial intermembrane space import and assembly protein 40 (MIA40), found in Kluyveromyces lactis (strain ATCC 8585 / CBS 2359 / DSM 70799 / NBRC 1267 / NRRL Y-1140 / WM37) (Yeast).